The chain runs to 101 residues: Small ribosomal subunit protein bS18c (101 aa).

The protein belongs to the bacterial ribosomal protein bS18 family. In terms of assembly, part of the 30S ribosomal subunit.

The protein resides in the plastid. It is found in the chloroplast. The sequence is that of Small ribosomal subunit protein bS18c from Vitis vinifera (Grape).